The primary structure comprises 117 residues: G antigen 12B/C/D/E (117 aa).

Residues 1-117 (MSWRGRSTYY…PEEGEKQSQC (117 aa)) form a disordered region. 2 stretches are compositionally biased toward acidic residues: residues 32-45 (FSDE…EEGE) and 87-96 (ECEDGPDGQE). Positions 103–117 (EEVKTPEEGEKQSQC) are enriched in basic and acidic residues.

The protein belongs to the GAGE family.

This chain is G antigen 12B/C/D/E (GAGE12B), found in Homo sapiens (Human).